A 258-amino-acid chain; its full sequence is Polysialic acid transport protein KpsM (258 aa).

The 222-residue stretch at 30–251 (LGYLWAILEP…FIGLALYRTR (222 aa)) folds into the ABC transmembrane type-2 domain. A run of 6 helical transmembrane segments spans residues 33–53 (LWAI…FGYI), 61–81 (ISFP…SSIS), 110–130 (ALLE…IVWM), 144–164 (VLTW…FMVV), 175–195 (LPIL…LHSI), and 227–247 (GVSL…GLAL).

It belongs to the ABC-2 integral membrane protein family.

Its subcellular location is the cell inner membrane. KpsM and KpsT constitute a system for the transport of polysialic acid across the cytoplasmic membrane. In Escherichia coli, this protein is Polysialic acid transport protein KpsM (kpsM).